A 402-amino-acid polypeptide reads, in one-letter code: Indole-3-glycerol phosphate synthase, chloroplastic (402 aa).

Residues 1 to 65 (MEGLVPVQRL…SDLKESLAVS (65 aa)) constitute a chloroplast transit peptide.

It belongs to the TrpC family. As to expression, expressed in leaves.

It localises to the plastid. It is found in the chloroplast. The catalysed reaction is 1-(2-carboxyphenylamino)-1-deoxy-D-ribulose 5-phosphate + H(+) = (1S,2R)-1-C-(indol-3-yl)glycerol 3-phosphate + CO2 + H2O. It functions in the pathway amino-acid biosynthesis; L-tryptophan biosynthesis; L-tryptophan from chorismate: step 4/5. In terms of biological role, indole-3-glycerol phosphate synthase required for tryptophan biosynthesis. The polypeptide is Indole-3-glycerol phosphate synthase, chloroplastic (Arabidopsis thaliana (Mouse-ear cress)).